We begin with the raw amino-acid sequence, 224 residues long: Large ribosomal subunit protein bL25 (224 aa).

The interval 196–224 (VEEVDTDAEEVDAADVPATEQGSEEDKGE) is disordered. A compositionally biased stretch (acidic residues) spans 197–208 (EEVDTDAEEVDA).

It belongs to the bacterial ribosomal protein bL25 family. CTC subfamily. In terms of assembly, part of the 50S ribosomal subunit; part of the 5S rRNA/L5/L18/L25 subcomplex. Contacts the 5S rRNA. Binds to the 5S rRNA independently of L5 and L18.

Functionally, this is one of the proteins that binds to the 5S RNA in the ribosome where it forms part of the central protuberance. The polypeptide is Large ribosomal subunit protein bL25 (Psychrobacter sp. (strain PRwf-1)).